Here is a 492-residue protein sequence, read N- to C-terminus: High-affinity nickel transport protein (492 aa).

The Cytoplasmic portion of the chain corresponds to 1–24 (MLSRWTRRVNESRLAQRKLTLLGR). A helical transmembrane segment spans residues 25 to 45 (AIALVVGELLFNAVCWIAAGI). Residues 46 to 50 (CFGKT) are Extracellular-facing. The chain crosses the membrane as a helical span at residues 51 to 71 (DGILGLALLAWTIGLRHGLDA). Residues 72 to 94 (DHISAIDNATRQLVSQGQLPITC) lie on the Cytoplasmic side of the membrane. A helical membrane pass occupies residues 95-115 (GLFFSLGHSTIVIVVNVAIAV). The Extracellular portion of the chain corresponds to 116 to 136 (SVDIYDKLDRVGSIGGIVGAA). Residues 137-157 (VSASFLFLIACLNIYFLVGAI) form a helical membrane-spanning segment. Residues 158–210 (KQRRSMKRRQALGLPPDEDEGDPSKIYGGGCMVRVVGPILRAVDRPWKMYPVG) are Cytoplasmic-facing. A helical transmembrane segment spans residues 211–231 (VLFGFGFDTASSIALLAISAI). The Extracellular segment spans residues 232 to 239 (AQRGPNGD). The chain crosses the membrane as a helical span at residues 240–260 (AISHGKIVILPFLFTAGMSLV). The Cytoplasmic portion of the chain corresponds to 261–382 (DSLDSILMLY…AKANTMSSLS (122 aa)). The chain crosses the membrane as a helical span at residues 383–403 (IILTLLSILVALSISLIEIMG). Topologically, residues 404–439 (LIGDNCTQCQDAANDPDGGGLAGSWWRAWARANDQS) are extracellular. N-linked (GlcNAc...) asparagine glycosylation occurs at Asn408. Residues 440-460 (GYIGAAIVGCFAAILAGWYGA) traverse the membrane as a helical segment. At 461–492 (KWGKKKWKARRDANAAIVLEDNEDDAAETPVA) the chain is on the cytoplasmic side.

It belongs to the NiCoT transporter (TC 2.A.52) family.

The protein resides in the cell membrane. Functionally, high-affinity nickel-specific transporter responsible for nickel uptake and required for high levels of activity of urease URE1. Does not transport cobalt. Plays a role in host brain invasion. The polypeptide is High-affinity nickel transport protein (Cryptococcus neoformans var. grubii serotype A (strain H99 / ATCC 208821 / CBS 10515 / FGSC 9487) (Filobasidiella neoformans var. grubii)).